Consider the following 229-residue polypeptide: Large ribosomal subunit protein uL1 (229 aa).

It belongs to the universal ribosomal protein uL1 family. In terms of assembly, part of the 50S ribosomal subunit.

Binds directly to 23S rRNA. The L1 stalk is quite mobile in the ribosome, and is involved in E site tRNA release. Functionally, protein L1 is also a translational repressor protein, it controls the translation of the L11 operon by binding to its mRNA. The chain is Large ribosomal subunit protein uL1 from Bifidobacterium animalis subsp. lactis (strain AD011).